The following is a 118-amino-acid chain: UPF0102 protein lpp3065 (118 aa).

The protein belongs to the UPF0102 family.

This Legionella pneumophila (strain Paris) protein is UPF0102 protein lpp3065.